The primary structure comprises 826 residues: MSISRREFLKANAAVAAATAVGATLPVKIVEAAEQKDNIKWDKAPCRFCGVGCSVLVGTDNGKVVATKGDPESPVNKGLNCIKGYFLSKIMYGKDRLTTPLLRMKDGQYDKEGEFTPISWDSAFDIMADKWKDTLKTKGPTAVGMFGSGQWTVWEGYAASKLHKAGFLTNNIDPNARHCMASAVGGFMRTFGIDEPMGCYDDLEAADQFVLWGANMAEMHPILWARLSDRRLSSPTSRVHVLSTYENRSFDLADNAMVFRPQSDLVILNYVANYIIQNDAVNKDFVNKHTKFALGTTDIGYGLRPDHPLEKKAKNPGNGKSKPISFDEYAKFVSSYTLEYAAEMSGVEPEKLELMAKAYADPNVKMMSLWTMGINQHTRGVWANNMLYNIHLLTGKIATPGNSPFSLTGQPSACGTAREVGTFAHRLPADMVVANPKHREITEKLWQVPAGTIPPKPGFHAVLQSRMLKDGKLNCYWTMCTNNMQAGPNINDEMYPGFRNPENFIVVSDPYPTVTAMAADLILPTAMWVEKEGAYGNAERRTHMWHQQVKAPEGAKSDLWQLMEFSKRFKVSEVWPAELIAKQPELADKTLFDVLYANGVVDKFPSSECKGQYNDEADAFGFYVQKGLFEEYAQFGRGHAHDLADFDTYHETRGLRWPVVDGKETLRRFSKGDPYVKGDKEFDFYGKPDGKAVIFALPFEPAAEEPNEEYDIWLSTGRVLEHWHTGSMTARVPELYRAYPDAQIFMHPEDAKARGLKRGDEVIVASPRGEVKTRVETKGRNKPPRGVAFMPFFDARQLVNKLILDATDPLSKETDFKKCPVKVMKA.

The tat-type signal signal peptide spans 1–32 (MSISRREFLKANAAVAAATAVGATLPVKIVEA). A 4Fe-4S Mo/W bis-MGD-type domain is found at 39 to 95 (IKWDKAPCRFCGVGCSVLVGTDNGKVVATKGDPESPVNKGLNCIKGYFLSKIMYGKD). [4Fe-4S] cluster-binding residues include C46, C49, C53, and C81. Mo-bis(molybdopterin guanine dinucleotide) contacts are provided by residues K83, Q150, N175, C179, 212 to 219 (WGANMAEM), 262 to 264 (QSD), M372, Q376, N482, 508 to 509 (SD), K531, D558, and 716 to 725 (TGRVLEHWHT). F792 serves as a coordination point for substrate. Residues N800 and K817 each coordinate Mo-bis(molybdopterin guanine dinucleotide).

Belongs to the prokaryotic molybdopterin-containing oxidoreductase family. NasA/NapA/NarB subfamily. As to quaternary structure, component of the periplasmic nitrate reductase NapAB complex composed of NapA and NapB. The cofactor is [4Fe-4S] cluster. Requires Mo-bis(molybdopterin guanine dinucleotide) as cofactor. Predicted to be exported by the Tat system. The position of the signal peptide cleavage has not been experimentally proven.

Its subcellular location is the periplasm. The catalysed reaction is 2 Fe(II)-[cytochrome] + nitrate + 2 H(+) = 2 Fe(III)-[cytochrome] + nitrite + H2O. In terms of biological role, catalytic subunit of the periplasmic nitrate reductase complex NapAB. Receives electrons from NapB and catalyzes the reduction of nitrate to nitrite. This chain is Periplasmic nitrate reductase, found in Shewanella halifaxensis (strain HAW-EB4).